Here is a 424-residue protein sequence, read N- to C-terminus: MNPDNTIAVITETIPIGMQFDKVYLSTFNMWREILSNTTKTLDISSFYWSLSDEVGTNFGTIILNKIVQLPKRGVRVRVAVNKSNKPLKDVERLQMAGVEVRYIDITNILGGVLHTKFWISDNTHIYLGSANMDWRSLTQVKELGIAIFNNRNLAADLTQIFEVYWYLGVNNLPYNWKNFYPSYYNTDHPLSINVSGVPHSVFIASAPQQLCTMERTNDLTALLSCIRNASKFVYVSVMNFIPIIYSKAGNILFWPYIEDELRRAAIDRQVSVKLLISCWQRSSFIMRNFLRSIAMLKSKNINIEVKLFIVPDADPPIPYSRVNHAKYMVTDKTAYIGTSNWTGNYFTDTCGASINITPDDGLGLRQQLEDIFMRDWNSKYSYELYDTSPTKRCRLLKNMKQCTNDIYCDEIQPEKEIPEYSLE.

PLD phosphodiesterase domains lie at 110 to 137 (LGGVLHTKFWISDNTHIYLGSANMDWRS) and 320 to 346 (YSRVNHAKYMVTDKTAYIGTSNWTGNY).

The protein belongs to the orthopoxvirus OPG042 family.

Its subcellular location is the virion. Functionally, DNA nicking enzyme that cleaves extruded cruciform DNA at its tip. Probably nicks viral hairpins. In Vaccinia virus (strain Western Reserve) (VACV), this protein is Virion nicking-joining enzyme (OPG042).